Here is a 131-residue protein sequence, read N- to C-terminus: UPF0102 protein YraN (131 aa).

The span at 1 to 19 shows a compositional bias: polar residues; it reads MATVPTRSGSPRQLTTKQT. The disordered stretch occupies residues 1-20; that stretch reads MATVPTRSGSPRQLTTKQTG.

It belongs to the UPF0102 family.

The chain is UPF0102 protein YraN from Escherichia fergusonii (strain ATCC 35469 / DSM 13698 / CCUG 18766 / IAM 14443 / JCM 21226 / LMG 7866 / NBRC 102419 / NCTC 12128 / CDC 0568-73).